The primary structure comprises 409 residues: Fructose-1,6-bisphosphatase, chloroplastic (409 aa).

A chloroplast-targeting transit peptide spans 1–49 (MAAATTTTSRPLLLSRQQAAASSLQCRLPRRPGSSLFAGQGQASTPNVR). Residues E131, E160, D181, L183, and D184 each contribute to the Mg(2+) site. 184–187 (DGSS) contributes to the substrate binding site. An intrachain disulfide couples C223 to C228. The substrate site is built by N287, Y319, Y337, Y339, and K349. E355 is a Mg(2+) binding site.

The protein belongs to the FBPase class 1 family. As to quaternary structure, homotetramer. It depends on Mg(2+) as a cofactor. In terms of tissue distribution, in photosynthetically active tissues, and in the shoot and root apical meristems.

Its subcellular location is the plastid. The protein localises to the chloroplast. It catalyses the reaction beta-D-fructose 1,6-bisphosphate + H2O = beta-D-fructose 6-phosphate + phosphate. Its pathway is carbohydrate biosynthesis; Calvin cycle. This chain is Fructose-1,6-bisphosphatase, chloroplastic (FBP), found in Triticum aestivum (Wheat).